The primary structure comprises 290 residues: NAD kinase (290 aa).

Residue D72 is the Proton acceptor of the active site. Residues 72 to 73, K77, 145 to 146, D175, 186 to 191, and A210 contribute to the NAD(+) site; these read DG, NE, and TAYSLS.

It belongs to the NAD kinase family. A divalent metal cation serves as cofactor.

The protein localises to the cytoplasm. It catalyses the reaction NAD(+) + ATP = ADP + NADP(+) + H(+). Functionally, involved in the regulation of the intracellular balance of NAD and NADP, and is a key enzyme in the biosynthesis of NADP. Catalyzes specifically the phosphorylation on 2'-hydroxyl of the adenosine moiety of NAD to yield NADP. The sequence is that of NAD kinase from Bacteroides fragilis (strain ATCC 25285 / DSM 2151 / CCUG 4856 / JCM 11019 / LMG 10263 / NCTC 9343 / Onslow / VPI 2553 / EN-2).